A 374-amino-acid chain; its full sequence is Ribosomal large subunit pseudouridine synthase D (374 aa).

Positions 1 to 20 are disordered; the sequence is MQNTSFDNESDYSDDSDFAS. Acidic residues predominate over residues 8-17; it reads NESDYSDDSD. The S4 RNA-binding domain maps to 39-112; that stretch reads GRLDAVLAKL…MALDIVYEDD (74 aa). Residue Asp-160 is part of the active site.

This sequence belongs to the pseudouridine synthase RluA family.

The protein resides in the cytoplasm. The catalysed reaction is uridine(1911/1915/1917) in 23S rRNA = pseudouridine(1911/1915/1917) in 23S rRNA. Functionally, responsible for synthesis of pseudouridine from uracil at positions 1911, 1915 and 1917 in 23S ribosomal RNA. The polypeptide is Ribosomal large subunit pseudouridine synthase D (rluD) (Neisseria meningitidis serogroup B (strain ATCC BAA-335 / MC58)).